The chain runs to 195 residues: Xanthine phosphoribosyltransferase (195 aa).

Xanthine contacts are provided by L20 and N27. A128–A132 is a binding site for 5-phospho-alpha-D-ribose 1-diphosphate. K156 contacts xanthine.

This sequence belongs to the purine/pyrimidine phosphoribosyltransferase family. Xpt subfamily. Homodimer.

The protein resides in the cytoplasm. It carries out the reaction XMP + diphosphate = xanthine + 5-phospho-alpha-D-ribose 1-diphosphate. It functions in the pathway purine metabolism; XMP biosynthesis via salvage pathway; XMP from xanthine: step 1/1. Converts the preformed base xanthine, a product of nucleic acid breakdown, to xanthosine 5'-monophosphate (XMP), so it can be reused for RNA or DNA synthesis. The sequence is that of Xanthine phosphoribosyltransferase from Latilactobacillus sakei subsp. sakei (strain 23K) (Lactobacillus sakei subsp. sakei).